We begin with the raw amino-acid sequence, 299 residues long: ATP phosphoribosyltransferase (299 aa).

The protein belongs to the ATP phosphoribosyltransferase family. Long subfamily. In terms of assembly, equilibrium between an active dimeric form, an inactive hexameric form and higher aggregates. Interconversion between the various forms is largely reversible and is influenced by the natural substrates and inhibitors of the enzyme. Mg(2+) serves as cofactor.

It localises to the cytoplasm. The catalysed reaction is 1-(5-phospho-beta-D-ribosyl)-ATP + diphosphate = 5-phospho-alpha-D-ribose 1-diphosphate + ATP. It functions in the pathway amino-acid biosynthesis; L-histidine biosynthesis; L-histidine from 5-phospho-alpha-D-ribose 1-diphosphate: step 1/9. Feedback inhibited by histidine. Functionally, catalyzes the condensation of ATP and 5-phosphoribose 1-diphosphate to form N'-(5'-phosphoribosyl)-ATP (PR-ATP). Has a crucial role in the pathway because the rate of histidine biosynthesis seems to be controlled primarily by regulation of HisG enzymatic activity. This is ATP phosphoribosyltransferase from Escherichia fergusonii (strain ATCC 35469 / DSM 13698 / CCUG 18766 / IAM 14443 / JCM 21226 / LMG 7866 / NBRC 102419 / NCTC 12128 / CDC 0568-73).